A 129-amino-acid chain; its full sequence is Type II secretion system protein I (129 aa).

Residues 1–6 constitute a propeptide, leader sequence; sequence MKRARG. N-methylphenylalanine is present on phenylalanine 7. Residues 7–27 form a helical membrane-spanning segment; sequence FTLLEVLVALAIFAMVAASVL.

Belongs to the GSP I family. Type II secretion is composed of four main components: the outer membrane complex, the inner membrane complex, the cytoplasmic secretion ATPase and the periplasm-spanning pseudopilus. Forms the tip of the type II pseudopilus by interacting with XcpU, XcpW and XcpX. Interacts with core component XcpT. Cleaved by prepilin peptidase. Post-translationally, methylated by prepilin peptidase at the amino group of the N-terminal phenylalanine once the leader sequence is cleaved by prepilin peptidase.

The protein localises to the cell inner membrane. Component of the type II secretion system required for the energy-dependent secretion of extracellular factors such as proteases and toxins from the periplasm. Part of the pseudopilus tip complex that is critical for the recognition and binding of secretion substrates. Type II pseudopilus confers increased bacterial adhesive capabilities. The chain is Type II secretion system protein I (xcpV) from Pseudomonas aeruginosa (strain ATCC 15692 / DSM 22644 / CIP 104116 / JCM 14847 / LMG 12228 / 1C / PRS 101 / PAO1).